A 225-amino-acid chain; its full sequence is Probable proteasome subunit beta type-6 (225 aa).

This sequence belongs to the peptidase T1B family. The 26S proteasome consists of a 20S proteasome core and two 19S regulatory subunits. The 20S proteasome core is composed of 28 subunits that are arranged in four stacked rings, resulting in a barrel-shaped structure. The two end rings are each formed by seven alpha subunits, and the two central rings are each formed by seven beta subunits. The catalytic chamber with the active sites is on the inside of the barrel.

The protein localises to the cytoplasm. It is found in the nucleus. Functionally, non-catalytic component of the proteasome, a multicatalytic proteinase complex which is characterized by its ability to cleave peptides with Arg, Phe, Tyr, Leu, and Glu adjacent to the leaving group at neutral or slightly basic pH. The proteasome has an ATP-dependent proteolytic activity. The sequence is that of Probable proteasome subunit beta type-6 (pam1) from Schizosaccharomyces pombe (strain 972 / ATCC 24843) (Fission yeast).